The chain runs to 412 residues: DnaJ homolog subfamily A member 2 (412 aa).

Positions 8–70 constitute a J domain; sequence KLYDILGVPP…EKRELYDRYG (63 aa). Lys39 carries the N6-acetyllysine modification. Phosphoserine occurs at positions 78 and 123. A CR-type zinc finger spans residues 130 to 214; the sequence is GKTTKLQLSK…CEGKKVIKEV (85 aa). Lys134 participates in a covalent cross-link: Glycyl lysine isopeptide (Lys-Gly) (interchain with G-Cter in SUMO2). Zn(2+) contacts are provided by Cys143 and Cys146. One copy of the CXXCXGXG motif repeat lies at 143-150; it reads CSACSGQG. Position 152 is an N6-acetyllysine (Lys152). Positions 159, 162, 186, 189, 202, and 205 each coordinate Zn(2+). CXXCXGXG motif repeat units lie at residues 159-166, 186-193, and 202-209; these read CSACRGRG, CSDCNGEG, and CKKCEGKK. The segment at 365-412 is disordered; that stretch reads IGETEEVELQEFDSTRGSGGGQRREAYNDSSDEESSSHHGPGVQCAHQ. Residue Tyr391 is modified to Phosphotyrosine. A phosphoserine mark is found at Ser394 and Ser395. Cysteine methyl ester is present on Cys409. Residue Cys409 is the site of S-farnesyl cysteine attachment. The propeptide at 410-412 is removed in mature form; sequence AHQ.

It is found in the membrane. Functionally, co-chaperone of Hsc70. Stimulates ATP hydrolysis and the folding of unfolded proteins mediated by HSPA1A/B (in vitro). This Rattus norvegicus (Rat) protein is DnaJ homolog subfamily A member 2 (Dnaja2).